Here is a 219-residue protein sequence, read N- to C-terminus: GTP-binding nuclear protein GSP1/CNR1 (219 aa).

Serine 2 is modified (N-acetylserine). Position 2 is a phosphoserine (serine 2). In terms of domain architecture, Small GTPase Ran-type spans 9 to 173 (EVPTFKLVLV…LWLARKLAGN (165 aa)). 20-27 (DGGTGKTT) contributes to the GTP binding site. The tract at residues 39 to 47 (KKYIATIGV) is switch-I. GTP-binding positions include glycine 70, 124 to 127 (NKVD), and 152 to 154 (SAK). The segment at 70–86 (GQEKFGGLRDGYYINAQ) is switch-II.

Belongs to the small GTPase superfamily. Ran family. As to quaternary structure, found in a nuclear export complex with RanGTP, exportin and pre-miRNA. Forms a complex with YRB1. Interacts with BUD5, CEX1, RRP12, SRM1, and DIS3/RRP44.

Its subcellular location is the nucleus. Functionally, GTP-binding protein involved in nucleocytoplasmic transport. Required for the import of protein into the nucleus and also for RNA export. Essential for cell viability. By analogy with Ras, Ran may be activated when GTP is exchanged for bound GDP by RCC1 and inactivated when GTP is hydrolyzed by Ran upon activation by RanGAP1. In Saccharomyces cerevisiae (strain ATCC 204508 / S288c) (Baker's yeast), this protein is GTP-binding nuclear protein GSP1/CNR1 (GSP1).